The chain runs to 551 residues: Calnexin (551 aa).

The first 23 residues, 1 to 23, serve as a signal peptide directing secretion; it reads MRPQNVAGVAGTGALIMAAGALA. Residues 24-477 lie on the Lumenal side of the membrane; sequence DQTVFHPTSL…QAIKQMPEVA (454 aa). Positions 293-315 are disordered; it reads EEEPETIPDPEAEKPEEWDDEED. The helical transmembrane segment at 478-498 threads the bilayer; that stretch reads AGLAAAVFTLLGMLLALFGFI. The Cytoplasmic portion of the chain corresponds to 499-551; that stretch reads GSAPTKVKQTTVKTKAVAPVAPAGEEEKKALDQAGVEIPAEGSKKRVTRSTKE. The disordered stretch occupies residues 526-551; that stretch reads KKALDQAGVEIPAEGSKKRVTRSTKE.

This sequence belongs to the calreticulin family.

The protein resides in the endoplasmic reticulum membrane. Functionally, endoplasmic reticulum (ER) chaperone that functions to stabilize non-native glycoproteins and retain them in the ER until they are properly folded or targeted for ER associated degradation (ERAD). With co-chaperone DNJ1, coordinately maintains ER homeostasis and contributes to maintenance of cell wall architecture. In Cryptococcus neoformans var. grubii serotype A (strain H99 / ATCC 208821 / CBS 10515 / FGSC 9487) (Filobasidiella neoformans var. grubii), this protein is Calnexin.